The following is a 228-amino-acid chain: Cytochrome c oxidase subunit 2 (228 aa).

Residues 1–26 (MATWANLGLQDSSSPLMEQLNFFHDH) lie on the Mitochondrial intermembrane side of the membrane. The chain crosses the membrane as a helical span at residues 27–48 (TLLILTMITILVGYIMGMLSFN). The Mitochondrial matrix segment spans residues 49–62 (KFTNRFLLHGQTIE). A helical membrane pass occupies residues 63–82 (IIWTVLPAIILMFIAFPSLR). Topologically, residues 83 to 228 (LLYLMDEINT…FIKWITSMTN (146 aa)) are mitochondrial intermembrane. Positions 161, 196, 198, 200, 204, and 207 each coordinate Cu cation. E198 is a Mg(2+) binding site.

This sequence belongs to the cytochrome c oxidase subunit 2 family. Component of the cytochrome c oxidase (complex IV, CIV), a multisubunit enzyme composed of a catalytic core of 3 subunits and several supernumerary subunits. The complex exists as a monomer or a dimer and forms supercomplexes (SCs) in the inner mitochondrial membrane with ubiquinol-cytochrome c oxidoreductase (cytochrome b-c1 complex, complex III, CIII). Cu cation serves as cofactor.

It is found in the mitochondrion inner membrane. The catalysed reaction is 4 Fe(II)-[cytochrome c] + O2 + 8 H(+)(in) = 4 Fe(III)-[cytochrome c] + 2 H2O + 4 H(+)(out). Its function is as follows. Component of the cytochrome c oxidase, the last enzyme in the mitochondrial electron transport chain which drives oxidative phosphorylation. The respiratory chain contains 3 multisubunit complexes succinate dehydrogenase (complex II, CII), ubiquinol-cytochrome c oxidoreductase (cytochrome b-c1 complex, complex III, CIII) and cytochrome c oxidase (complex IV, CIV), that cooperate to transfer electrons derived from NADH and succinate to molecular oxygen, creating an electrochemical gradient over the inner membrane that drives transmembrane transport and the ATP synthase. Cytochrome c oxidase is the component of the respiratory chain that catalyzes the reduction of oxygen to water. Electrons originating from reduced cytochrome c in the intermembrane space (IMS) are transferred via the dinuclear copper A center (CU(A)) of subunit 2 and heme A of subunit 1 to the active site in subunit 1, a binuclear center (BNC) formed by heme A3 and copper B (CU(B)). The BNC reduces molecular oxygen to 2 water molecules using 4 electrons from cytochrome c in the IMS and 4 protons from the mitochondrial matrix. In Anopheles gambiae (African malaria mosquito), this protein is Cytochrome c oxidase subunit 2 (COII).